Consider the following 1303-residue polypeptide: DNA-directed RNA polymerase subunit beta' (1303 aa).

Residues Cys60, Cys62, Cys75, and Cys78 each coordinate Zn(2+). Mg(2+) is bound by residues Asp535, Asp537, and Asp539. The Zn(2+) site is built by Cys876, Cys953, Cys960, and Cys963.

Belongs to the RNA polymerase beta' chain family. In terms of assembly, the RNAP catalytic core consists of 2 alpha, 1 beta, 1 beta' and 1 omega subunit. When a sigma factor is associated with the core the holoenzyme is formed, which can initiate transcription. Requires Mg(2+) as cofactor. Zn(2+) serves as cofactor.

It carries out the reaction RNA(n) + a ribonucleoside 5'-triphosphate = RNA(n+1) + diphosphate. DNA-dependent RNA polymerase catalyzes the transcription of DNA into RNA using the four ribonucleoside triphosphates as substrates. This Saccharopolyspora erythraea (strain ATCC 11635 / DSM 40517 / JCM 4748 / NBRC 13426 / NCIMB 8594 / NRRL 2338) protein is DNA-directed RNA polymerase subunit beta'.